Here is a 449-residue protein sequence, read N- to C-terminus: Tubulin alpha-8 chain (449 aa).

The MREC motif motif lies at 1–4; that stretch reads MREC. Residues glutamine 11, glutamate 71, serine 140, glycine 144, threonine 145, threonine 179, asparagine 206, and asparagine 228 each coordinate GTP. Glutamate 71 contributes to the Mg(2+) binding site. The active site involves glutamate 254.

This sequence belongs to the tubulin family. As to quaternary structure, dimer of alpha and beta chains. A typical microtubule is a hollow water-filled tube with an outer diameter of 25 nm and an inner diameter of 15 nM. Alpha-beta heterodimers associate head-to-tail to form protofilaments running lengthwise along the microtubule wall with the beta-tubulin subunit facing the microtubule plus end conferring a structural polarity. Microtubules usually have 13 protofilaments but different protofilament numbers can be found in some organisms and specialized cells. It depends on Mg(2+) as a cofactor. Some glutamate residues at the C-terminus are polyglycylated, resulting in polyglycine chains on the gamma-carboxyl group. Glycylation is mainly limited to tubulin incorporated into axonemes (cilia and flagella) whereas glutamylation is prevalent in neuronal cells, centrioles, axonemes, and the mitotic spindle. Both modifications can coexist on the same protein on adjacent residues, and lowering polyglycylation levels increases polyglutamylation, and reciprocally. Cilia and flagella glycylation is required for their stability and maintenance. Flagella glycylation controls sperm motility. Post-translationally, some glutamate residues at the C-terminus are polyglutamylated, resulting in polyglutamate chains on the gamma-carboxyl group. Polyglutamylation plays a key role in microtubule severing by spastin (SPAST). SPAST preferentially recognizes and acts on microtubules decorated with short polyglutamate tails: severing activity by SPAST increases as the number of glutamates per tubulin rises from one to eight, but decreases beyond this glutamylation threshold. Glutamylation is also involved in cilia motility. In terms of processing, the C-terminal phenylalanine residue is cleaved by MATCAP1/KIAA0895L. In terms of tissue distribution, expressed at highest levels in the testis, followed by skeletal and heart muscle. Expressed at low levels in the developing brain.

Its subcellular location is the cytoplasm. It is found in the cytoskeleton. The catalysed reaction is GTP + H2O = GDP + phosphate + H(+). Functionally, tubulin is the major constituent of microtubules, a cylinder consisting of laterally associated linear protofilaments composed of alpha- and beta-tubulin heterodimers. Microtubules grow by the addition of GTP-tubulin dimers to the microtubule end, where a stabilizing cap forms. Below the cap, tubulin dimers are in GDP-bound state, owing to GTPase activity of alpha-tubulin. The polypeptide is Tubulin alpha-8 chain (Tuba8) (Mus musculus (Mouse)).